The primary structure comprises 128 residues: Protein Wnt-10 (128 aa).

5 disulfides stabilise this stretch: Cys3–Cys17, Cys5–Cys12, Cys74–Cys105, Cys90–Cys100, and Cys127–Cys128. Ser9 carries the O-palmitoleoyl serine; by PORCN lipid modification. Asn91 is a glycosylation site (N-linked (GlcNAc...) asparagine).

The protein belongs to the Wnt family. Palmitoleoylation is required for efficient binding to frizzled receptors. Depalmitoleoylation leads to Wnt signaling pathway inhibition. In terms of tissue distribution, in embryo, in dorsal hindbrain; in adults, in brain.

The protein localises to the secreted. It is found in the extracellular space. Its subcellular location is the extracellular matrix. Ligand for members of the frizzled family of seven transmembrane receptors. Probable developmental protein. May be a signaling molecule which affects the development of discrete regions of tissues. Is likely to signal over only few cell diameters. The chain is Protein Wnt-10 (wnt10) from Xenopus laevis (African clawed frog).